Consider the following 60-residue polypeptide: Small ribosomal subunit protein uS10 (60 aa).

The protein belongs to the universal ribosomal protein uS10 family.

This is Small ribosomal subunit protein uS10 (RPS20) from Zea mays (Maize).